Reading from the N-terminus, the 823-residue chain is MKLFGFGSRRGQTAQGSIDHVYTGSGYRIRDSELQKIHRAAVKGDAAEVERCLARRSGDLDALDKQHRTALHLACTSGHVQVVTLLVNRKCQIDVCDKENRTPLIQAVHCQEEACAVILLEHGANPNLKDIYGNTALHYAVYSESTSLAEKLLSHGAHIEALDKDNNTPLLFAIICKKEKMVEFLLKKKASSHAVDRLRRSALMLAVYYDSPGIVNILLKQNIDVFAQDMCGRDAEDYAISHHLTKIQQQILEHKKKILKKEKSDVGSSDESAVSIFHELRVDSLPASDDKDLNVATKQCVPEKVSEPLPGSSHEKGNRIVNGQGEGPPAKHPSLKPSTEVEDPAVKGAVQRKNVQTLRAEQALPVASEEEQERHERSEKKQPQVKEGNNTNKSEKIQLSENICDSTSSAAAGRLTQQRKIGKTYPQQFPKKLKEEHDRCTLKQENEEKTNVNMLYKKNREELERKEKQYKKEVEAKQLEPTVQSLEMKSKTARNTPNWDFHNHEEMKGLMDENCILKADIAILRQEICTMKNDNLEKENKYLKDIKIVKETNAALEKYIKLNEEMITETAFRYQQELNDLKAENTRLNAELLKEKESKKRLEADIESYQSRLAAAISKHSESVKTERNLKLALERTRDVSVQVEMSSAISKVKAENEFLTEQLSETQIKFNALKDKFRKTRDSLRKKSLALETVQNDLSQTQQQTQEMKEMYQNAEAKVNNSTGKWNCVEERICHLQRENAWLVQQLDDVHQKEDHKEIVTNIQRGFIESGKKDLVLEEKSKKLMNECDHLKESLFQYEREKTEGVVSIKEDKYFQTSRKTI.

5 ANK repeats span residues 66–95 (QHRT…QIDV), 99–128 (ENRT…NPNL), 132–161 (YGNT…HIEA), 165–194 (DNNT…SSHA), and 198–227 (LRRS…DVFA). Disordered stretches follow at residues 301-343 (VPEK…EVED) and 355-402 (VQTL…LSEN). The segment covering 372–384 (QERHERSEKKQPQ) has biased composition (basic and acidic residues). Coiled-coil stretches lie at residues 431 to 480 (KKLK…KQLE), 565 to 724 (EMIT…NNST), and 776 to 805 (LVLE…EKTE).

This Homo sapiens (Human) protein is Ankyrin repeat domain-containing protein 20A1 (ANKRD20A1).